Here is a 212-residue protein sequence, read N- to C-terminus: Phosphatidylserine decarboxylase proenzyme (212 aa).

Catalysis depends on Ser-182, which acts as the Schiff-base intermediate with substrate; via pyruvic acid. Ser-182 is modified (pyruvic acid (Ser); by autocatalysis).

This sequence belongs to the phosphatidylserine decarboxylase family. PSD-A subfamily. As to quaternary structure, heterodimer of a large membrane-associated beta subunit and a small pyruvoyl-containing alpha subunit. Requires pyruvate as cofactor. In terms of processing, is synthesized initially as an inactive proenzyme. Formation of the active enzyme involves a self-maturation process in which the active site pyruvoyl group is generated from an internal serine residue via an autocatalytic post-translational modification. Two non-identical subunits are generated from the proenzyme in this reaction, and the pyruvate is formed at the N-terminus of the alpha chain, which is derived from the carboxyl end of the proenzyme. The post-translation cleavage follows an unusual pathway, termed non-hydrolytic serinolysis, in which the side chain hydroxyl group of the serine supplies its oxygen atom to form the C-terminus of the beta chain, while the remainder of the serine residue undergoes an oxidative deamination to produce ammonia and the pyruvoyl prosthetic group on the alpha chain.

Its subcellular location is the cell membrane. It catalyses the reaction a 1,2-diacyl-sn-glycero-3-phospho-L-serine + H(+) = a 1,2-diacyl-sn-glycero-3-phosphoethanolamine + CO2. Its pathway is phospholipid metabolism; phosphatidylethanolamine biosynthesis; phosphatidylethanolamine from CDP-diacylglycerol: step 2/2. Its function is as follows. Catalyzes the formation of phosphatidylethanolamine (PtdEtn) from phosphatidylserine (PtdSer). This chain is Phosphatidylserine decarboxylase proenzyme, found in Paraburkholderia xenovorans (strain LB400).